A 726-amino-acid chain; its full sequence is AP-1 complex subunit beta-1 (726 aa).

This sequence belongs to the adaptor complexes large subunit family. In terms of assembly, adaptor protein complex 1 (AP-1) is a heterotetramer composed of two large adaptins (gamma-type subunit APL4 and beta-type subunit APL2), a medium adaptin (mu-type subunit APM1) and a small adaptin (sigma-type subunit APS1). Interacts with CHC1. Interacts with APM2, probably forming an alternative AP-1-like complex.

It is found in the cell membrane. Its subcellular location is the membrane. The protein resides in the coated pit. Adaptins are components of the adaptor complexes which link clathrin to receptors in coated vesicles. Clathrin-associated protein complexes are believed to interact with the cytoplasmic tails of membrane proteins, leading to their selection and concentration. The AP-1 complex interacts directly with clathrin. The sequence is that of AP-1 complex subunit beta-1 (APL2) from Saccharomyces cerevisiae (strain ATCC 204508 / S288c) (Baker's yeast).